The chain runs to 96 residues: Small ribosomal subunit protein bS6 (96 aa).

The protein belongs to the bacterial ribosomal protein bS6 family.

In terms of biological role, binds together with bS18 to 16S ribosomal RNA. The sequence is that of Small ribosomal subunit protein bS6 from Carboxydothermus hydrogenoformans (strain ATCC BAA-161 / DSM 6008 / Z-2901).